A 467-amino-acid polypeptide reads, in one-letter code: Nodulation protein T (467 aa).

The N-terminal stretch at 1–17 is a signal peptide; sequence MRFTRYTTPFFSLLLSG. The N-palmitoyl cysteine moiety is linked to residue Cys18. Cys18 is lipidated: S-diacylglycerol cysteine.

It belongs to the outer membrane factor (OMF) (TC 1.B.17) family.

It is found in the cell membrane. The protein is Nodulation protein T (nodT) of Rhizobium leguminosarum bv. trifolii.